Consider the following 166-residue polypeptide: Phospholipase A2 inhibitor (166 aa).

Positions 1–19 (MRLILLSGLLLLGIFLANG) are cleaved as a signal peptide. The C-type lectin domain maps to 46–161 (LKGSFLIVHK…CDDNLLVVCE (116 aa)). Disulfide bonds link C83-C160 and C138-C152. The N-linked (GlcNAc...) asparagine glycan is linked to N122.

The protein belongs to the alpha-type phospholipase A2 inhibitor family. Homotrimer; non-covalently linked. As to expression, expressed by the liver.

The protein localises to the secreted. In terms of biological role, this phospholipase A2 inhibitor binds directly phospholipase A2 in the presence or absence of calcium. The protein is Phospholipase A2 inhibitor of Bothrops jararacussu (Jararacussu).